We begin with the raw amino-acid sequence, 1088 residues long: Platelet-derived growth factor receptor alpha (1088 aa).

Residues 1–23 form the signal peptide; the sequence is MGTSQAFLVLSCLLTGPSLIVCQ. Ig-like C2-type domains are found at residues 24–112, 116–200, 201–305, 318–409, and 413–516; these read LLLP…SEIE, IYIY…FKTS, EFNV…KTVT, PTFG…FELS, and PASI…LKLV. Residues 24 to 527 lie on the Extracellular side of the membrane; that stretch reads LLLPSILPNE…PSLRSELTVA (504 aa). Residues cysteine 48 and cysteine 99 are joined by a disulfide bond. Asparagine 75, asparagine 102, and asparagine 178 each carry an N-linked (GlcNAc...) asparagine glycan. Cystine bridges form between cysteine 149/cysteine 188 and cysteine 234/cysteine 289. Residues asparagine 352, asparagine 358, asparagine 457, and asparagine 467 are each glycosylated (N-linked (GlcNAc...) asparagine). Cysteine 434 and cysteine 500 are disulfide-bonded. A helical transmembrane segment spans residues 528-548; the sequence is AAVLVLLVIVIVSLIVLVVIW. The Cytoplasmic portion of the chain corresponds to 549–1088; the sequence is KQKPRYEIRW…SSDLVEDSFL (540 aa). Tyrosine 571 and tyrosine 573 each carry phosphotyrosine; by autocatalysis. Residues 592 to 953 form the Protein kinase domain; that stretch reads LVLGRILGSG…HLSEIVENLL (362 aa). ATP-binding positions include 598–606 and lysine 626; that span reads LGSGAFGKV. Tyrosine 719, tyrosine 730, tyrosine 741, tyrosine 753, tyrosine 761, and tyrosine 767 each carry phosphotyrosine; by autocatalysis. Residue aspartate 817 is the Proton acceptor of the active site. Phosphotyrosine; by autocatalysis occurs at positions 848, 987, and 1017. The segment at 1017-1088 is disordered; sequence YIIPLPDIDP…SSDLVEDSFL (72 aa). The segment covering 1040–1058 has biased composition (polar residues); the sequence is SSQTSEESAIETGSSSSTF. Acidic residues predominate over residues 1064–1088; that stretch reads ETIEDIDMMDDIGIDSSDLVEDSFL.

The protein belongs to the protein kinase superfamily. Tyr protein kinase family. CSF-1/PDGF receptor subfamily. In terms of assembly, interacts with homodimeric PDGFA, PDGFB and PDGFC, and with heterodimers formed by PDGFA and PDGFB. Monomer in the absence of bound ligand. Interaction with dimeric PDGFA, PDGFB and/or PDGFC leads to receptor dimerization, where both PDGFRA homodimers and heterodimers with PDGFRB are observed. Interacts (tyrosine phosphorylated) with SHB (via SH2 domain). Interacts (tyrosine phosphorylated) with SHF (via SH2 domain). Interacts (tyrosine phosphorylated) with SRC (via SH2 domain). Interacts (tyrosine phosphorylated) with PIK3R1. Interacts (tyrosine phosphorylated) with PLCG1 (via SH2 domain). Interacts (tyrosine phosphorylated) with CRK, GRB2 and GRB7. Interacts with CD248; this interaction promotes PDGF receptor signaling pathway. In terms of processing, ubiquitinated, leading to its internalization and degradation. Autophosphorylated on tyrosine residues upon ligand binding. Autophosphorylation occurs in trans, i.e. one subunit of the dimeric receptor phosphorylates tyrosine residues on the other subunit. Phosphorylation at Tyr-730 and Tyr-741 is important for interaction with PIK3R1. Phosphorylation at Tyr-719 and Tyr-753 is important for interaction with PTPN11. Phosphorylation at Tyr-761 is important for interaction with CRK. Phosphorylation at Tyr-571 and Tyr-573 is important for interaction with SRC and SRC family members. Phosphorylation at Tyr-987 and Tyr-1017 is important for interaction with PLCG1.

The protein resides in the cell membrane. It is found in the cell projection. It localises to the cilium. The protein localises to the golgi apparatus. The enzyme catalyses L-tyrosyl-[protein] + ATP = O-phospho-L-tyrosyl-[protein] + ADP + H(+). Present in an inactive conformation in the absence of bound ligand. Binding of PDGFA and/or PDGFB leads to dimerization and activation by autophosphorylation on tyrosine residues. Inhibited by imatinib, nilotinib and sorafenib. Its function is as follows. Tyrosine-protein kinase that acts as a cell-surface receptor for PDGFA, PDGFB and PDGFC and plays an essential role in the regulation of embryonic development, cell proliferation, survival and chemotaxis. Depending on the context, promotes or inhibits cell proliferation and cell migration. Plays an important role in the differentiation of bone marrow-derived mesenchymal stem cells. Required for normal skeleton development and cephalic closure during embryonic development. Required for normal development of the mucosa lining the gastrointestinal tract, and for recruitment of mesenchymal cells and normal development of intestinal villi. Plays a role in cell migration and chemotaxis in wound healing. Plays a role in platelet activation, secretion of agonists from platelet granules, and in thrombin-induced platelet aggregation. Binding of its cognate ligands - homodimeric PDGFA, homodimeric PDGFB, heterodimers formed by PDGFA and PDGFB or homodimeric PDGFC -leads to the activation of several signaling cascades; the response depends on the nature of the bound ligand and is modulated by the formation of heterodimers between PDGFRA and PDGFRB. Phosphorylates PIK3R1, PLCG1, and PTPN11. Activation of PLCG1 leads to the production of the cellular signaling molecules diacylglycerol and inositol 1,4,5-trisphosphate, mobilization of cytosolic Ca(2+) and the activation of protein kinase C. Phosphorylates PIK3R1, the regulatory subunit of phosphatidylinositol 3-kinase, and thereby mediates activation of the AKT1 signaling pathway. Mediates activation of HRAS and of the MAP kinases MAPK1/ERK2 and/or MAPK3/ERK1. Promotes activation of STAT family members STAT1, STAT3 and STAT5A and/or STAT5B. Receptor signaling is down-regulated by protein phosphatases that dephosphorylate the receptor and its down-stream effectors, and by rapid internalization of the activated receptor. The chain is Platelet-derived growth factor receptor alpha (Pdgfra) from Rattus norvegicus (Rat).